We begin with the raw amino-acid sequence, 376 residues long: Erythronate-4-phosphate dehydrogenase (376 aa).

Substrate-binding residues include Ser-45 and Thr-67. Asp-147 is an NAD(+) binding site. Arg-209 is an active-site residue. Asp-233 is an NAD(+) binding site. The active site involves Glu-238. The Proton donor role is filled by His-255. Position 258 (Gly-258) interacts with NAD(+). Position 259 (Tyr-259) interacts with substrate.

This sequence belongs to the D-isomer specific 2-hydroxyacid dehydrogenase family. PdxB subfamily. Homodimer.

It localises to the cytoplasm. It catalyses the reaction 4-phospho-D-erythronate + NAD(+) = (R)-3-hydroxy-2-oxo-4-phosphooxybutanoate + NADH + H(+). The protein operates within cofactor biosynthesis; pyridoxine 5'-phosphate biosynthesis; pyridoxine 5'-phosphate from D-erythrose 4-phosphate: step 2/5. Its function is as follows. Catalyzes the oxidation of erythronate-4-phosphate to 3-hydroxy-2-oxo-4-phosphonooxybutanoate. The chain is Erythronate-4-phosphate dehydrogenase from Shewanella sp. (strain MR-4).